Reading from the N-terminus, the 695-residue chain is MADIFDSFELLYDRPGEPMINTKGEDKVLFELTEQFLTPEYANNGLELNNRFGDEEEVSRKIILKNLDKIPEFPKAKQLPNDADFSLFLPSHQEMANEVIDVLMSVTENQLQELLSTCVYARINLNPQLFNYCYTVAIMHRRDTGKVRVQNYAEIFPAKFLDSQVFTQAREAAAVIPKTIPRTPIIIPRDYTATDLEEEHRLAYWREDLGINLHHWHWHLVYPFSASDEKIVAKDRRGELFFYMHQQIIARYNCERLCNSLKRVKKFSDWREPIPEAYYPKLDSLTSARGWPPRQAGMRWQDLKRPVDGLNVTIDDMERYRRNIEEAIATGNVILPDKSTKKLDIDMLGNMMEASVLSPNRDLYGSIHNNMHSFSAYMHDPEHRYLESFGVIADEATTMRDPFFYRVHAWVDDIFQSFKEAPHNVRPYSRSQLENPGVQVTSVAVESAGGQQNVLNTFWMQSDVNLSKGLDFSDRGPVYARFTHLNHRPFRYVIKANNTASARRTTVRIFIAPKTDERNLPWALSDQRKMFIEMDRFVVPLSAGENTITRQSTESSLTIPFEQTFRDLSIQGSDPRRSELAAFNYCGCGWPQHMLVPKGTVGGVAYQLFVMLSNYELDKIEQPDGRELSCVEASMFCGLKDKKYPDARPMGYPFDRPSNSATNIEDFSAMSNMGLQDIVIKLSDVTEPNPRNPPA.

Cu cation-binding residues include histidine 215, histidine 219, and histidine 245. Glutamate 353 (proton acceptor) is an active-site residue. Positions 368, 372, and 408 each coordinate Cu cation. 2 cysteine pairs are disulfide-bonded: cysteine 586-cysteine 630 and cysteine 588-cysteine 637.

As to quaternary structure, heterodimer. Forms a complex with an interleukin 1-like protein as a consequence of a host defense response. It depends on Cu(2+) as a cofactor. Post-translationally, the N-terminus is blocked. Synthesized by oenocytoids, a type of hemocyte, and released into the hemolymph plasma.

The protein resides in the secreted. The enzyme catalyses 2 L-dopa + O2 = 2 L-dopaquinone + 2 H2O. It catalyses the reaction L-tyrosine + O2 = L-dopaquinone + H2O. With respect to regulation, activated by immulectin and lipopolysaccharide. Its function is as follows. This is a copper-containing oxidase that functions in the formation of pigments such as melanins and other polyphenolic compounds. Catalyzes the rate-limiting conversions of tyrosine to DOPA, DOPA to DOPA-quinone and possibly 5,6 dihydroxyindole to indole-5'6 quinone. Binds to the surface of hemocytes and is involved in hemocyte melanization. This Manduca sexta (Tobacco hawkmoth) protein is Phenoloxidase subunit 2.